The chain runs to 159 residues: ATP synthase subunit b (159 aa).

A helical transmembrane segment spans residues 4-24; the sequence is VGINGTLIVQLVTFVILVALL.

The protein belongs to the ATPase B chain family. F-type ATPases have 2 components, F(1) - the catalytic core - and F(0) - the membrane proton channel. F(1) has five subunits: alpha(3), beta(3), gamma(1), delta(1), epsilon(1). F(0) has three main subunits: a(1), b(2) and c(10-14). The alpha and beta chains form an alternating ring which encloses part of the gamma chain. F(1) is attached to F(0) by a central stalk formed by the gamma and epsilon chains, while a peripheral stalk is formed by the delta and b chains.

The protein resides in the cell inner membrane. Its function is as follows. F(1)F(0) ATP synthase produces ATP from ADP in the presence of a proton or sodium gradient. F-type ATPases consist of two structural domains, F(1) containing the extramembraneous catalytic core and F(0) containing the membrane proton channel, linked together by a central stalk and a peripheral stalk. During catalysis, ATP synthesis in the catalytic domain of F(1) is coupled via a rotary mechanism of the central stalk subunits to proton translocation. In terms of biological role, component of the F(0) channel, it forms part of the peripheral stalk, linking F(1) to F(0). The chain is ATP synthase subunit b from Acidithiobacillus ferrooxidans (strain ATCC 23270 / DSM 14882 / CIP 104768 / NCIMB 8455) (Ferrobacillus ferrooxidans (strain ATCC 23270)).